Here is an 879-residue protein sequence, read N- to C-terminus: Beta-mannosidase (879 aa).

Positions 1–19 are cleaved as a signal peptide; the sequence is MHLHLLLILALFRAGCVVA. N-linked (GlcNAc...) asparagine glycosylation is found at Asn35, Asn77, Asn89, and Asn113. A disulfide bridge connects residues Cys167 and Cys176. 190–192 lines the substrate pocket; the sequence is WDW. N-linked (GlcNAc...) asparagine glycosylation is found at Asn226, Asn297, and Asn302. Asn456 contributes to the substrate binding site. Catalysis depends on Glu457, which acts as the Proton donor. 3 cysteine pairs are disulfide-bonded: Cys540–Cys629, Cys732–Cys761, and Cys764–Cys769. Glu554 functions as the Nucleophile in the catalytic mechanism. Asn736 is a glycosylation site (N-linked (GlcNAc...) asparagine). N-linked (GlcNAc...) asparagine glycosylation is found at Asn803 and Asn807.

The protein belongs to the glycosyl hydrolase 2 family. Monomer. In terms of tissue distribution, highest level in liver, high levels in lung, testis, skin and spleen, moderate level in thymus. Activity found in plasma, kidney, liver, spleen, pancreas, brain, testis, epididymis, heart, lung and skeletal muscle.

It localises to the lysosome. The catalysed reaction is Hydrolysis of terminal, non-reducing beta-D-mannose residues in beta-D-mannosides.. The protein operates within glycan metabolism; N-glycan degradation. In terms of biological role, exoglycosidase that cleaves the single beta-linked mannose residue from the non-reducing end of all N-linked glycoprotein oligosaccharides. The chain is Beta-mannosidase from Mus musculus (Mouse).